Here is a 1152-residue protein sequence, read N- to C-terminus: Alpha-mannosidase 2x (1152 aa).

Topologically, residues 1 to 5 are cytoplasmic; sequence MKLKK. Residues 6 to 26 form a helical; Signal-anchor for type II membrane protein membrane-spanning segment; the sequence is QVTVCGAAIFCVAVFSLYLML. The Lumenal portion of the chain corresponds to 27-796; it reads DRVQHDPARH…VDEEQEQQME (770 aa). Residues 43 to 74 adopt a coiled-coil conformation; that stretch reads PRSQISVLQNRIEQLEQLLEENHDIISRIKDS. Zn(2+) contacts are provided by His175 and Asp177. Asn225 carries N-linked (GlcNAc...) asparagine glycosylation. Residue Asp289 participates in Zn(2+) binding. Asp289 serves as the catalytic Nucleophile. An N-linked (GlcNAc...) asparagine glycan is attached at Asn305. Residue His569 participates in Zn(2+) binding.

Belongs to the glycosyl hydrolase 38 family. As to quaternary structure, homodimer; disulfide-linked. Interacts with MGAT4D. Zn(2+) is required as a cofactor.

The protein localises to the golgi apparatus membrane. It carries out the reaction N(4)-{beta-D-GlcNAc-(1-&gt;2)-alpha-D-Man-(1-&gt;3)-[alpha-D-Man-(1-&gt;3)-[alpha-D-Man-(1-&gt;6)]-alpha-D-Man-(1-&gt;6)]-beta-D-Man-(1-&gt;4)-beta-D-GlcNAc-(1-&gt;4)-beta-D-GlcNAc}-L-asparaginyl-[protein] + 2 H2O = 2 alpha-D-mannopyranose + an N(4)-{beta-D-GlcNAc-(1-&gt;2)-alpha-D-Man-(1-&gt;3)-[alpha-D-Man-(1-&gt;6)]-beta-D-Man-(1-&gt;4)-beta-D-GlcNAc-(1-&gt;4)-beta-D-GlcNAc}-L-asparaginyl-[protein]. The protein operates within protein modification; protein glycosylation. Its function is as follows. Catalyzes the first committed step in the biosynthesis of complex N-glycans. It controls conversion of high mannose to complex N-glycans; the final hydrolytic step in the N-glycan maturation pathway. This is Alpha-mannosidase 2x (Man2a2) from Mus musculus (Mouse).